Consider the following 150-residue polypeptide: MRVLVLHGPNLNLLGRRETGIYGNETLADIDARLQELASELGVDLECFQSNSEAALIERLHGAPGTVDAVVFNPAGFTHYSIALRDAVAAVGLPVVEVHLTNIHAREEFRHRSVIAPVAAGQISGFGTAGYLLGLRAAVELVSRGKMSRA.

Tyrosine 22 serves as the catalytic Proton acceptor. Substrate-binding residues include asparagine 73, histidine 79, and aspartate 86. The active-site Proton donor is histidine 99. Residues 100–101 (LT) and arginine 110 contribute to the substrate site.

The protein belongs to the type-II 3-dehydroquinase family. In terms of assembly, homododecamer.

The enzyme catalyses 3-dehydroquinate = 3-dehydroshikimate + H2O. It participates in metabolic intermediate biosynthesis; chorismate biosynthesis; chorismate from D-erythrose 4-phosphate and phosphoenolpyruvate: step 3/7. Its function is as follows. Catalyzes a trans-dehydration via an enolate intermediate. The sequence is that of 3-dehydroquinate dehydratase from Desulforudis audaxviator (strain MP104C).